The following is a 429-amino-acid chain: 3-phosphoshikimate 1-carboxyvinyltransferase (429 aa).

3 residues coordinate 3-phosphoshikimate: Lys11, Ser12, and Arg16. Residue Lys11 participates in phosphoenolpyruvate binding. Residues Gly82 and Arg110 each coordinate phosphoenolpyruvate. 4 residues coordinate 3-phosphoshikimate: Ser155, Gln157, Asp302, and Lys329. Gln157 contributes to the phosphoenolpyruvate binding site. The Proton acceptor role is filled by Asp302. Phosphoenolpyruvate-binding residues include Arg333 and Arg385.

The protein belongs to the EPSP synthase family. As to quaternary structure, monomer.

The protein localises to the cytoplasm. The catalysed reaction is 3-phosphoshikimate + phosphoenolpyruvate = 5-O-(1-carboxyvinyl)-3-phosphoshikimate + phosphate. Its pathway is metabolic intermediate biosynthesis; chorismate biosynthesis; chorismate from D-erythrose 4-phosphate and phosphoenolpyruvate: step 6/7. Functionally, catalyzes the transfer of the enolpyruvyl moiety of phosphoenolpyruvate (PEP) to the 5-hydroxyl of shikimate-3-phosphate (S3P) to produce enolpyruvyl shikimate-3-phosphate and inorganic phosphate. In Helicobacter pylori (strain P12), this protein is 3-phosphoshikimate 1-carboxyvinyltransferase.